Reading from the N-terminus, the 333-residue chain is UPF0284 protein VNG_1572C (333 aa).

The protein belongs to the UPF0284 family.

The protein is UPF0284 protein VNG_1572C of Halobacterium salinarum (strain ATCC 700922 / JCM 11081 / NRC-1) (Halobacterium halobium).